Consider the following 134-residue polypeptide: Profilin-2 (134 aa).

Residues Cys13 and Cys118 are joined by a disulfide bond. The Involved in PIP2 interaction signature appears at 84–100; sequence AVIRGKKGSGGITIKKT. Thr114 bears the Phosphothreonine mark.

Belongs to the profilin family. Occurs in many kinds of cells as a complex with monomeric actin in a 1:1 ratio. In terms of processing, phosphorylated by MAP kinases.

It localises to the cytoplasm. It is found in the cytoskeleton. Its function is as follows. Binds to actin and affects the structure of the cytoskeleton. At high concentrations, profilin prevents the polymerization of actin, whereas it enhances it at low concentrations. In Olea europaea (Common olive), this protein is Profilin-2.